A 529-amino-acid chain; its full sequence is Peptide chain release factor 3 (529 aa).

The 270-residue stretch at 11–280 folds into the tr-type G domain; that stretch reads NKRRTFAIIS…GLTKWAPTPL (270 aa). GTP-binding positions include 20 to 27, 88 to 92, and 142 to 145; these read SHPDAGKT, DTPGH, and NKCD.

It belongs to the TRAFAC class translation factor GTPase superfamily. Classic translation factor GTPase family. PrfC subfamily.

It localises to the cytoplasm. Its function is as follows. Increases the formation of ribosomal termination complexes and stimulates activities of RF-1 and RF-2. It binds guanine nucleotides and has strong preference for UGA stop codons. It may interact directly with the ribosome. The stimulation of RF-1 and RF-2 is significantly reduced by GTP and GDP, but not by GMP. This Pseudoalteromonas translucida (strain TAC 125) protein is Peptide chain release factor 3.